The chain runs to 530 residues: Membrane protein insertase YidC (530 aa).

4 helical membrane-spanning segments follow: residues 5-25 (VVIA…MFPP), 348-368 (YGLA…PLTH), 418-438 (LPML…MFSI), and 492-512 (PVVF…YWLI).

It belongs to the OXA1/ALB3/YidC family. Type 1 subfamily. In terms of assembly, interacts with the Sec translocase complex via SecD. Specifically interacts with transmembrane segments of nascent integral membrane proteins during membrane integration.

The protein localises to the cell inner membrane. Its function is as follows. Required for the insertion and/or proper folding and/or complex formation of integral membrane proteins into the membrane. Involved in integration of membrane proteins that insert both dependently and independently of the Sec translocase complex, as well as at least some lipoproteins. Aids folding of multispanning membrane proteins. The chain is Membrane protein insertase YidC from Geotalea daltonii (strain DSM 22248 / JCM 15807 / FRC-32) (Geobacter daltonii).